Consider the following 447-residue polypeptide: Kynurenine 3-monooxygenase (447 aa).

This sequence belongs to the aromatic-ring hydroxylase family. KMO subfamily. The cofactor is FAD.

The catalysed reaction is L-kynurenine + NADPH + O2 + H(+) = 3-hydroxy-L-kynurenine + NADP(+) + H2O. It functions in the pathway cofactor biosynthesis; NAD(+) biosynthesis; quinolinate from L-kynurenine: step 1/3. Catalyzes the hydroxylation of L-kynurenine (L-Kyn) to form 3-hydroxy-L-kynurenine (L-3OHKyn). Required for synthesis of quinolinic acid. The polypeptide is Kynurenine 3-monooxygenase (Flavobacterium psychrophilum (strain ATCC 49511 / DSM 21280 / CIP 103535 / JIP02/86)).